The sequence spans 541 residues: Carboxypeptidase Y homolog A (541 aa).

The signal sequence occupies residues 1–17; the sequence is MKVATSALLIGAAAAQQ. Residues 18-125 constitute a propeptide that is removed on maturation; the sequence is QQILKFPDSF…KLEQYSLRAK (108 aa). Cystine bridges form between Cys-179–Cys-418, Cys-313–Cys-327, Cys-337–Cys-360, Cys-344–Cys-353, and Cys-382–Cys-388. Asn-210 carries N-linked (GlcNAc...) asparagine glycosylation. Residue Ser-266 is part of the active site. The active site involves Asp-457. Residue Asn-505 is glycosylated (N-linked (GlcNAc...) asparagine). His-516 is a catalytic residue.

Belongs to the peptidase S10 family.

It localises to the vacuole. The catalysed reaction is Release of a C-terminal amino acid with broad specificity.. Vacuolar carboxypeptidase involved in degradation of small peptides. Digests preferentially peptides containing an aliphatic or hydrophobic residue in P1' position, as well as methionine, leucine or phenylalanine in P1 position of ester substrate. The sequence is that of Carboxypeptidase Y homolog A (cpyA) from Pyrenophora tritici-repentis (strain Pt-1C-BFP) (Wheat tan spot fungus).